A 96-amino-acid chain; its full sequence is Co-chaperonin GroES (96 aa).

It belongs to the GroES chaperonin family. Heptamer of 7 subunits arranged in a ring. Interacts with the chaperonin GroEL.

It localises to the cytoplasm. Functionally, together with the chaperonin GroEL, plays an essential role in assisting protein folding. The GroEL-GroES system forms a nano-cage that allows encapsulation of the non-native substrate proteins and provides a physical environment optimized to promote and accelerate protein folding. GroES binds to the apical surface of the GroEL ring, thereby capping the opening of the GroEL channel. The sequence is that of Co-chaperonin GroES from Nitrosospira multiformis (strain ATCC 25196 / NCIMB 11849 / C 71).